Reading from the N-terminus, the 175-residue chain is DELTA-stichotoxin-Hcr4a (175 aa).

Residues 1–10 are plays an important role in the hemolytic activity; the sequence is ALAGAIIAGA. Positions 9-28 are N-terminal region; that stretch reads GASLTFQILDKVLAELGQVS. Serine 52, valine 85, serine 103, proline 105, tyrosine 131, tyrosine 135, and tyrosine 136 together coordinate phosphocholine. Residues 103-118 form a trp-rich region, which is important for the binding to lipid membrane region; that stretch reads SVPFDYNLYSNWWDVK.

Belongs to the actinoporin family. Sea anemone subfamily. Octamer or nonamer in membranes. Monomer in the soluble state.

The protein localises to the secreted. The protein resides in the nematocyst. Its subcellular location is the target cell membrane. Its function is as follows. Pore-forming protein that forms cations-selective hydrophilic pores of around 1 nm and causes cardiac stimulation and cytolysis. Pore formation is a multi-step process that involves specific recognition of membrane sphingomyelin (but neither cholesterol nor phosphatidylcholine) using aromatic rich region and adjacent phosphocholine (POC) binding site, firm binding to the membrane (mainly driven by hydrophobic interactions) accompanied by the transfer of the N-terminal region to the lipid-water interface and finally pore formation after oligomerization of monomers. In Radianthus crispa (Leathery sea anemone), this protein is DELTA-stichotoxin-Hcr4a.